Consider the following 452-residue polypeptide: MSRDTIVAQATPIGRGGVGILRVSGPLAQQVAEQVLGKTLTPRMANYLPFKDSDGSVLDQGIALYFKAPNSFTGENVLELQGHGGQIVMDLLLKRILQIDGIRLARPGEFSEQAFLNDKLDLAQAEAIADLIEASSEQAARSALKSLQGEFSNKINELVDSVIYLRTYVEAAIDFPDEEIDFLADGKIETHLREIIAKLAKVKNEAKQGAILREGMKVVIAGRPNAGKSSLLNTLAGREAAIVTDIAGTTRDVLREHIHIDGMPLHIIDTAGLRDATDEVEKIGIRRAWDEIEQADRILLILDSTENQVELDLVRSEFMAKLPPHIPLTIVRNKADLSGEAEVLNEQNGLTVISLSAKTQKGVDLLRQHLKQSMGYQVCTEGGFLARRRHLEALEQADIHLQAGLIQLTEFYAGELVAEELRIVQHHLSEITGQFTSDDLLGNIFSSFCIGK.

(6S)-5-formyl-5,6,7,8-tetrahydrofolate-binding residues include Arg-22, Glu-79, and Lys-119. Residues 215–375 (GMKVVIAGRP…LRQHLKQSMG (161 aa)) form the TrmE-type G domain. Residue Asn-225 participates in K(+) binding. GTP-binding positions include 225–230 (NAGKSS), 244–250 (TDIAGTT), 269–272 (DTAG), and 333–336 (NKAD). Residue Ser-229 coordinates Mg(2+). Residues Thr-244, Ile-246, and Thr-249 each coordinate K(+). Thr-250 is a binding site for Mg(2+). Residue Lys-452 coordinates (6S)-5-formyl-5,6,7,8-tetrahydrofolate.

This sequence belongs to the TRAFAC class TrmE-Era-EngA-EngB-Septin-like GTPase superfamily. TrmE GTPase family. Homodimer. Heterotetramer of two MnmE and two MnmG subunits. The cofactor is K(+).

It localises to the cytoplasm. Functionally, exhibits a very high intrinsic GTPase hydrolysis rate. Involved in the addition of a carboxymethylaminomethyl (cmnm) group at the wobble position (U34) of certain tRNAs, forming tRNA-cmnm(5)s(2)U34. This Histophilus somni (strain 2336) (Haemophilus somnus) protein is tRNA modification GTPase MnmE.